We begin with the raw amino-acid sequence, 286 residues long: ATP phosphoribosyltransferase (286 aa).

The protein belongs to the ATP phosphoribosyltransferase family. Long subfamily. Requires Mg(2+) as cofactor.

The protein localises to the cytoplasm. The enzyme catalyses 1-(5-phospho-beta-D-ribosyl)-ATP + diphosphate = 5-phospho-alpha-D-ribose 1-diphosphate + ATP. The protein operates within amino-acid biosynthesis; L-histidine biosynthesis; L-histidine from 5-phospho-alpha-D-ribose 1-diphosphate: step 1/9. Feedback inhibited by histidine. Catalyzes the condensation of ATP and 5-phosphoribose 1-diphosphate to form N'-(5'-phosphoribosyl)-ATP (PR-ATP). Has a crucial role in the pathway because the rate of histidine biosynthesis seems to be controlled primarily by regulation of HisG enzymatic activity. The polypeptide is ATP phosphoribosyltransferase (Arthrobacter sp. (strain FB24)).